The chain runs to 47 residues: Short neurotoxin D2A (47 aa).

2 disulfides stabilise this stretch: cysteine 3/cysteine 24 and cysteine 17/cysteine 39.

In terms of tissue distribution, expressed by the venom gland.

The protein localises to the secreted. This is Short neurotoxin D2A from Micrurus pyrrhocryptus (Coral snake).